An 806-amino-acid chain; its full sequence is Leucine--tRNA ligase (806 aa).

The short motif at 40 to 51 is the 'HIGH' region element; the sequence is PYPSGAGLHVGH. Positions 578 to 582 match the 'KMSKS' region motif; the sequence is KMSKS. ATP is bound at residue lysine 581.

The protein belongs to the class-I aminoacyl-tRNA synthetase family.

Its subcellular location is the cytoplasm. The enzyme catalyses tRNA(Leu) + L-leucine + ATP = L-leucyl-tRNA(Leu) + AMP + diphosphate. The protein is Leucine--tRNA ligase of Staphylococcus aureus (strain MSSA476).